Here is a 226-residue protein sequence, read N- to C-terminus: Putative uroporphyrinogen-III synthase (226 aa).

It belongs to the uroporphyrinogen-III synthase family.

It carries out the reaction hydroxymethylbilane = uroporphyrinogen III + H2O. Its pathway is porphyrin-containing compound metabolism; protoporphyrin-IX biosynthesis; coproporphyrinogen-III from 5-aminolevulinate: step 3/4. Functionally, catalyzes cyclization of the linear tetrapyrrole, hydroxymethylbilane, to the macrocyclic uroporphyrinogen III. This chain is Putative uroporphyrinogen-III synthase, found in Archaeoglobus fulgidus (strain ATCC 49558 / DSM 4304 / JCM 9628 / NBRC 100126 / VC-16).